We begin with the raw amino-acid sequence, 348 residues long: Putative transport protein HP_0567 (348 aa).

8 helical membrane-spanning segments follow: residues 6 to 26 (FFWI…QDFL), 27 to 47 (MDAL…VFLD), 56 to 76 (SFLC…FIVY), 143 to 163 (LKLI…FYYG), 194 to 214 (IVLL…GVMI), 224 to 244 (LGIL…LIWI), 266 to 286 (SILL…IVFI), and 300 to 320 (MLIF…GIIV).

The protein belongs to the autoinducer-2 exporter (AI-2E) (TC 2.A.86) family.

It is found in the cell membrane. The chain is Putative transport protein HP_0567 from Helicobacter pylori (strain ATCC 700392 / 26695) (Campylobacter pylori).